A 591-amino-acid polypeptide reads, in one-letter code: V-type ATP synthase alpha chain (591 aa).

ATP is bound at residue 232–239; that stretch reads GPFGAGKT.

This sequence belongs to the ATPase alpha/beta chains family.

It catalyses the reaction ATP + H2O + 4 H(+)(in) = ADP + phosphate + 5 H(+)(out). Produces ATP from ADP in the presence of a proton gradient across the membrane. The V-type alpha chain is a catalytic subunit. The polypeptide is V-type ATP synthase alpha chain (Clostridium perfringens (strain SM101 / Type A)).